We begin with the raw amino-acid sequence, 75 residues long: Small ribosomal subunit protein bS18 (75 aa).

The protein belongs to the bacterial ribosomal protein bS18 family. As to quaternary structure, part of the 30S ribosomal subunit. Forms a tight heterodimer with protein bS6.

Its function is as follows. Binds as a heterodimer with protein bS6 to the central domain of the 16S rRNA, where it helps stabilize the platform of the 30S subunit. The sequence is that of Small ribosomal subunit protein bS18 from Ruegeria sp. (strain TM1040) (Silicibacter sp.).